An 800-amino-acid polypeptide reads, in one-letter code: Structural protein ORF800 (800 aa).

Coiled-coil stretches lie at residues 98–130 (AENI…YNLA), 447–475 (LLAE…ANNL), 514–567 (AINQ…ANNL), and 606–633 (AINQ…NLLA). A disordered region spans residues 759–800 (AESIAESESETTESENNETTESTANSEGEKQEGEHGARLIRV). Residues 761–776 (SIAESESETTESENNE) show a composition bias toward acidic residues. A compositionally biased stretch (basic and acidic residues) spans 785-800 (EGEKQEGEHGARLIRV).

It is found in the virion. The protein is Structural protein ORF800 of Acidianus convivator (ATV).